Here is a 473-residue protein sequence, read N- to C-terminus: MAP kinase-activated protein kinase 5 (473 aa).

Residues 22–304 (INWTQKLGAG…IEGVLDHPWL (283 aa)) form the Protein kinase domain. ATP-binding positions include 28–36 (LGAGISGPV) and lysine 51. The residue at position 115 (serine 115) is a Phosphoserine; by PKA. Aspartate 148 (proton acceptor) is an active-site residue. The residue at position 182 (threonine 182) is a Phosphothreonine; by MAPK11, MAPK14, MAPK4, MAPK6 and PKA. Phosphoserine is present on residues serine 212 and serine 354. A coiled-coil region spans residues 409-440 (ENEDEKLNEVMQEAWKYNRECKLLRDALQSFS).

It belongs to the protein kinase superfamily. CAMK Ser/Thr protein kinase family. Interacts with SQSTM1. Interacts with ERK3/MAPK6 and ERK4/MAPK4 (via FRIEDE motif); the interaction is direct. Interacts with YWHAE; the interaction prevents phosphorylation of HSP27/HSPB1 leading to disrupt F-actin polymerization. In terms of processing, phosphorylated on Thr-182 ERK3/MAPK6 or ERK4/MAPK4; which is the regulatory phosphorylation site and is located on the T-loop/loop 12, leading to activation. Phosphorylation at Thr-182 by p38-alpha/MAPK14, p38-beta/MAPK11 is subject to debate. Phosphorylated at Ser-115 by PKA/PRKACA, leading to localization to the cytoplasm. Autophosphorylated. In terms of tissue distribution, expressed ubiquitously.

Its subcellular location is the cytoplasm. It is found in the nucleus. The enzyme catalyses L-seryl-[protein] + ATP = O-phospho-L-seryl-[protein] + ADP + H(+). It catalyses the reaction L-threonyl-[protein] + ATP = O-phospho-L-threonyl-[protein] + ADP + H(+). Its activity is regulated as follows. Activated following phosphorylation at Thr-182 by p38-alpha/MAPK14, p38-beta/MAPK11, ERK2/MAPK1, ERK3/MAPK6, and ERK4/MAPK4. Activated by stress-related extracellular stimuli; such as H(2)O(2), arsenite, anisomycin TNF alpha and also PMA and the calcium ionophore A23187; but to a lesser extent. In vitro, activated by SQSTM1. Inhibited by diterpenoid alkaloid noroxoaconitine. Tumor suppressor serine/threonine-protein kinase involved in mTORC1 signaling and post-transcriptional regulation. Phosphorylates FOXO3, ERK3/MAPK6, ERK4/MAPK4, HSP27/HSPB1, p53/TP53 and RHEB. Acts as a tumor suppressor by mediating Ras-induced senescence and phosphorylating p53/TP53. Involved in post-transcriptional regulation of MYC by mediating phosphorylation of FOXO3: phosphorylation of FOXO3 leads to promote nuclear localization of FOXO3, enabling expression of miR-34b and miR-34c, 2 post-transcriptional regulators of MYC that bind to the 3'UTR of MYC transcript and prevent MYC translation. Acts as a negative regulator of mTORC1 signaling by mediating phosphorylation and inhibition of RHEB. Part of the atypical MAPK signaling via its interaction with ERK3/MAPK6 or ERK4/MAPK4: the precise role of the complex formed with ERK3/MAPK6 or ERK4/MAPK4 is still unclear, but the complex follows a complex set of phosphorylation events: upon interaction with atypical MAPK (ERK3/MAPK6 or ERK4/MAPK4), ERK3/MAPK6 (or ERK4/MAPK4) is phosphorylated and then mediates phosphorylation and activation of MAPKAPK5, which in turn phosphorylates ERK3/MAPK6 (or ERK4/MAPK4). Mediates phosphorylation of HSP27/HSPB1 in response to PKA/PRKACA stimulation, inducing F-actin rearrangement. This is MAP kinase-activated protein kinase 5 (Mapkapk5) from Mus musculus (Mouse).